A 567-amino-acid chain; its full sequence is MGRGLLRGLWPLHIVLWTRIASTIPPHVPKSVNSDLMAGDNSGAVKLPQLCKFCDVTLSTCDNQKSCMSNCSVTSICEKPQEVCVAVWRKNDKNITLETVCHDPKFTYHGFTLEDATSPTCVMKEKKRAGETFFMCSCNTEECNDYIIFNEEYTTSSPDLLLVIIQVTGVSLLPPLGIAIAVIAIFYCYRVHRQQKLSPSWESSKPRKLMDFSDNCAIILEDDRSDISSTCANNINHNTELLPIELDTLVGKGRFAEVYKAKLKQNTSEQFETVAVKIFPYEEYSSWKTEKDIFSDINLKHENILQFLTAEERKTEMGKQYWLITAFHAKGNLQEYLTRHVISWEDLRKLGSSLARGIAHLHSDHTPCGRPKMPIVHRDLKSSNILVKNDLTCCLCDFGLSLRLDPTLSVDDLANSGQVGTARYMAPEVLESRMNLENMESFKQTDVYSMALVLWEMTSRCNAVGEVKDYEPPFGSKVREHPCVESMKDNVLRDRGRPEIPSFWLNHQGIQIVCETLTECWDHDPEARLTAQCVAERFSELEHPDRLSGRSCSQEKIPEDGSLNTTK.

A signal peptide spans 1-23 (MGRGLLRGLWPLHIVLWTRIAST). Over 24-166 (IPPHVPKSVN…SPDLLLVIIQ (143 aa)) the chain is Extracellular. 6 disulfides stabilise this stretch: Cys-51–Cys-84, Cys-54–Cys-71, Cys-61–Cys-67, Cys-77–Cys-101, Cys-121–Cys-136, and Cys-138–Cys-143. Asn-70 and Asn-94 each carry an N-linked (GlcNAc...) asparagine glycan. Residues 167–187 (VTGVSLLPPLGIAIAVIAIFY) form a helical membrane-spanning segment. Residues 188 to 567 (CYRVHRQQKL…PEDGSLNTTK (380 aa)) lie on the Cytoplasmic side of the membrane. A Protein kinase domain is found at 244–546 (IELDTLVGKG…RFSELEHPDR (303 aa)). ATP is bound by residues 250-258 (VGKGRFAEV) and Lys-277. The active-site Proton acceptor is Asp-379. A phosphoserine mark is found at Ser-409, Ser-548, and Ser-553. Residues 546–567 (RLSGRSCSQEKIPEDGSLNTTK) are disordered.

The protein belongs to the protein kinase superfamily. TKL Ser/Thr protein kinase family. TGFB receptor subfamily. As to quaternary structure, homodimer. Heterohexamer; TGFB1, TGFB2 and TGFB3 homodimeric ligands assemble a functional receptor composed of two TGFBR1 and TGFBR2 heterodimers to form a ligand-receptor heterohexamer. The respective affinity of TGFRB1 and TGFRB2 for the ligands may modulate the kinetics of assembly of the receptor and may explain the different biological activities of TGFB1, TGFB2 and TGFB3. Component of a complex composed of TSC22D1 (via N-terminus), TGFBR1 and TGFBR2; the interaction between TSC22D1 and TGFBR1 is inhibited by SMAD7 and promoted by TGFB1. Interacts with DAXX. Interacts with DYNLT4. Interacts with ZFYVE9; ZFYVE9 recruits SMAD2 and SMAD3 to the TGF-beta receptor. Interacts with and is activated by SCUBE3; this interaction does not affect TGFB1-binding to TGFBR2. Interacts with VPS39; this interaction is independent of the receptor kinase activity and of the presence of TGF-beta. Interacts with CLU. Requires Mg(2+) as cofactor. Mn(2+) serves as cofactor. Post-translationally, phosphorylated on a Ser/Thr residue in the cytoplasmic domain.

The protein localises to the cell membrane. It localises to the membrane raft. It catalyses the reaction L-threonyl-[receptor-protein] + ATP = O-phospho-L-threonyl-[receptor-protein] + ADP + H(+). The catalysed reaction is L-seryl-[receptor-protein] + ATP = O-phospho-L-seryl-[receptor-protein] + ADP + H(+). In terms of biological role, transmembrane serine/threonine kinase forming with the TGF-beta type I serine/threonine kinase receptor, TGFBR1, the non-promiscuous receptor for the TGF-beta cytokines TGFB1, TGFB2 and TGFB3. Transduces the TGFB1, TGFB2 and TGFB3 signal from the cell surface to the cytoplasm and is thus regulating a plethora of physiological and pathological processes including cell cycle arrest in epithelial and hematopoietic cells, control of mesenchymal cell proliferation and differentiation, wound healing, extracellular matrix production, immunosuppression and carcinogenesis. The formation of the receptor complex composed of 2 TGFBR1 and 2 TGFBR2 molecules symmetrically bound to the cytokine dimer results in the phosphorylation and the activation of TGFRB1 by the constitutively active TGFBR2. Activated TGFBR1 phosphorylates SMAD2 which dissociates from the receptor and interacts with SMAD4. The SMAD2-SMAD4 complex is subsequently translocated to the nucleus where it modulates the transcription of the TGF-beta-regulated genes. This constitutes the canonical SMAD-dependent TGF-beta signaling cascade. Also involved in non-canonical, SMAD-independent TGF-beta signaling pathways. This Rattus norvegicus (Rat) protein is TGF-beta receptor type-2 (Tgfbr2).